Reading from the N-terminus, the 495-residue chain is Glutamate--tRNA ligase (495 aa).

Residues 13-23 (PSPTGTPHVGL) carry the 'HIGH' region motif. Residues 257–261 (KLSKR) carry the 'KMSKS' region motif. Lysine 260 is an ATP binding site.

This sequence belongs to the class-I aminoacyl-tRNA synthetase family. Glutamate--tRNA ligase type 1 subfamily. As to quaternary structure, monomer.

It is found in the cytoplasm. It carries out the reaction tRNA(Glu) + L-glutamate + ATP = L-glutamyl-tRNA(Glu) + AMP + diphosphate. Catalyzes the attachment of glutamate to tRNA(Glu) in a two-step reaction: glutamate is first activated by ATP to form Glu-AMP and then transferred to the acceptor end of tRNA(Glu). The sequence is that of Glutamate--tRNA ligase from Mycolicibacterium vanbaalenii (strain DSM 7251 / JCM 13017 / BCRC 16820 / KCTC 9966 / NRRL B-24157 / PYR-1) (Mycobacterium vanbaalenii).